The sequence spans 226 residues: Ribonuclease 3 (226 aa).

An RNase III domain is found at 2 to 129; the sequence is IESISKIIKY…LIGAIYLDGG (128 aa). Mg(2+) is bound at residue E42. The active site involves D46. Mg(2+) is bound by residues N115 and E118. E118 is a catalytic residue. The region spanning 154 to 223 is the DRBM domain; the sequence is DAKTILQELV…ASLMLNQIHN (70 aa).

This sequence belongs to the ribonuclease III family. Homodimer. Mg(2+) is required as a cofactor.

Its subcellular location is the cytoplasm. It carries out the reaction Endonucleolytic cleavage to 5'-phosphomonoester.. Its function is as follows. Digests double-stranded RNA. Involved in the processing of primary rRNA transcript to yield the immediate precursors to the large and small rRNAs (23S and 16S). Processes some mRNAs, and tRNAs when they are encoded in the rRNA operon. Processes pre-crRNA and tracrRNA of type II CRISPR loci if present in the organism. This chain is Ribonuclease 3, found in Ehrlichia chaffeensis (strain ATCC CRL-10679 / Arkansas).